The primary structure comprises 243 residues: GTP cyclohydrolase 1 type 2 (243 aa).

A divalent metal cation contacts are provided by histidine 63, histidine 64, aspartate 102, histidine 209, and glutamate 213.

This sequence belongs to the GTP cyclohydrolase I type 2/NIF3 family. Homohexamer.

It carries out the reaction GTP + H2O = 7,8-dihydroneopterin 3'-triphosphate + formate + H(+). The protein operates within cofactor biosynthesis; 7,8-dihydroneopterin triphosphate biosynthesis; 7,8-dihydroneopterin triphosphate from GTP: step 1/1. Functionally, converts GTP to dihydroneopterin triphosphate. In Helicobacter pylori (strain J99 / ATCC 700824) (Campylobacter pylori J99), this protein is GTP cyclohydrolase 1 type 2.